The chain runs to 122 residues: MIQQETNLEVADNSGARRVMCIKVLGGSKRKYASVGDIIVVSIKEAIPRGKVKKGDVMKAVVVRTAKDIRRADGSVIRFDRNAAVLINNQGEPIGTRIFGPVTRELRAKNHMKIVSLAPEVL.

It belongs to the universal ribosomal protein uL14 family. As to quaternary structure, part of the 50S ribosomal subunit. Forms a cluster with proteins L3 and L19. In the 70S ribosome, L14 and L19 interact and together make contacts with the 16S rRNA in bridges B5 and B8.

Its function is as follows. Binds to 23S rRNA. Forms part of two intersubunit bridges in the 70S ribosome. The sequence is that of Large ribosomal subunit protein uL14 from Parvibaculum lavamentivorans (strain DS-1 / DSM 13023 / NCIMB 13966).